The following is a 173-amino-acid chain: Photosystem I assembly protein Ycf3 (173 aa).

TPR repeat units follow at residues alanine 35–proline 68, serine 72–methionine 105, and glycine 120–asparagine 153.

The protein belongs to the Ycf3 family.

The protein resides in the cellular thylakoid membrane. Essential for the assembly of the photosystem I (PSI) complex. May act as a chaperone-like factor to guide the assembly of the PSI subunits. This chain is Photosystem I assembly protein Ycf3, found in Rippkaea orientalis (strain PCC 8801 / RF-1) (Cyanothece sp. (strain PCC 8801)).